The chain runs to 476 residues: Cysteine--tRNA ligase (476 aa).

A Zn(2+)-binding site is contributed by cysteine 29. The short motif at 31–41 is the 'HIGH' region element; that stretch reads PTVYDYTHLGH. Residues cysteine 209, histidine 234, and glutamate 238 each coordinate Zn(2+). Residues 266 to 270 carry the 'KMSKS' region motif; that stretch reads KMSKS. Residue lysine 269 coordinates ATP.

This sequence belongs to the class-I aminoacyl-tRNA synthetase family. The cofactor is Zn(2+).

It localises to the cytoplasm. It catalyses the reaction tRNA(Cys) + L-cysteine + ATP = L-cysteinyl-tRNA(Cys) + AMP + diphosphate. The chain is Cysteine--tRNA ligase from Thermococcus onnurineus (strain NA1).